A 100-amino-acid chain; its full sequence is Ubiquitin-related modifier 1 homolog (100 aa).

The residue at position 100 (G100) is a 1-thioglycine. A Glycyl lysine isopeptide (Gly-Lys) (interchain with K-? in acceptor proteins) cross-link involves residue G100.

The protein belongs to the URM1 family. Post-translationally, C-terminal thiocarboxylation occurs in 2 steps, it is first acyl-adenylated (-COAMP) via the hesA/moeB/thiF part of the MOCS3 homolog, then thiocarboxylated (-COSH) via the rhodanese domain of the MOCS3 homolog.

The protein resides in the cytoplasm. It participates in tRNA modification; 5-methoxycarbonylmethyl-2-thiouridine-tRNA biosynthesis. Functionally, acts as a sulfur carrier required for 2-thiolation of mcm(5)S(2)U at tRNA wobble positions of cytosolic tRNA(Lys), tRNA(Glu) and tRNA(Gln). Serves as sulfur donor in tRNA 2-thiolation reaction by being thiocarboxylated (-COSH) at its C-terminus by MOCS3. The sulfur is then transferred to tRNA to form 2-thiolation of mcm(5)S(2)U. Also acts as a ubiquitin-like protein (UBL) that is covalently conjugated via an isopeptide bond to lysine residues of target proteins. The thiocarboxylated form serves as substrate for conjugation and oxidative stress specifically induces the formation of UBL-protein conjugates. The polypeptide is Ubiquitin-related modifier 1 homolog (Caenorhabditis elegans).